Reading from the N-terminus, the 88-residue chain is Beta-insect excitatory toxin 2 (88 aa).

Positions 1–18 (MKFLLLFLVVLPIMGVLG) are cleaved as a signal peptide. Residues 20 to 83 (KNGYAVDSSG…ISDTRKSYCD (64 aa)) form the LCN-type CS-alpha/beta domain. 4 disulfide bridges follow: C34/C55, C40/C60, C44/C62, and C56/C82.

It belongs to the long (4 C-C) scorpion toxin superfamily. Sodium channel inhibitor family. Beta subfamily. Expressed by the venom gland.

It is found in the secreted. Excitatory insect beta-toxins induce a spastic paralysis. They bind voltage-independently at site-4 of sodium channels (Nav) and shift the voltage of activation toward more negative potentials thereby affecting sodium channel activation and promoting spontaneous and repetitive firing. This toxin is active only on insects. The sequence is that of Beta-insect excitatory toxin 2 from Androctonus australis (Sahara scorpion).